Consider the following 267-residue polypeptide: Outer membrane protein assembly factor BamD (267 aa).

Positions 1 to 16 are cleaved as a signal peptide; the sequence is MKKILLTVSLGLALSA. Residue C17 is the site of N-palmitoyl cysteine attachment. Residue C17 is the site of S-diacylglycerol cysteine attachment.

The protein belongs to the BamD family. As to quaternary structure, part of the Bam complex.

It is found in the cell outer membrane. Functionally, part of the outer membrane protein assembly complex, which is involved in assembly and insertion of beta-barrel proteins into the outer membrane. Required for efficient transformation of Neisseria gonorrhoeae by species-related DNA. In Neisseria gonorrhoeae, this protein is Outer membrane protein assembly factor BamD.